Reading from the N-terminus, the 648-residue chain is Probable ATP-dependent RNA helicase DDX43 (648 aa).

Residues 1–60 form a disordered region; that stretch reads MSHHGGAPKASTWVVASRRSSTVSRAPERRPAEELNRTGPEGYSVGRGGRWRGTSRPPEA. A compositionally biased stretch (low complexity) spans 10–25; it reads ASTWVVASRRSSTVSR. Over residues 26-36 the composition is skewed to basic and acidic residues; it reads APERRPAEELN. Residues 67–128 form the KH domain; sequence ELPLCFALKS…AMQTKAKAVI (62 aa). Residues 242-270 carry the Q motif motif; it reads TFDDAFQCYPEVMENIKKAGFQKPTPIQS. A Helicase ATP-binding domain is found at 273–448; it reads WPIVLQGIDL…QSYLKEPMIV (176 aa). Residue 286–293 coordinates ATP; that stretch reads AQTGTGKT. Positions 396-399 match the DEAD box motif; sequence DEAD. The 162-residue stretch at 460–621 folds into the Helicase C-terminal domain; it reads SVKQNIIVTT…SIPEELVSMA (162 aa). The segment covering 628–641 has biased composition (basic and acidic residues); that stretch reads QQKREMERKMERPQ. The disordered stretch occupies residues 628–648; that stretch reads QQKREMERKMERPQGRPKKFH.

It belongs to the DEAD box helicase family. As to expression, expressed in testis. Expressed in many tumors of various histological types at a level that is 100-fold higher than the level observed in normal tissues except testis.

The catalysed reaction is ATP + H2O = ADP + phosphate + H(+). This Homo sapiens (Human) protein is Probable ATP-dependent RNA helicase DDX43 (DDX43).